We begin with the raw amino-acid sequence, 261 residues long: Leucine-rich repeat-containing protein 18 (261 aa).

LRR repeat units lie at residues 28 to 49 (GKKR…ILRL), 51 to 72 (DMDE…ISKF), 74 to 95 (NLRW…IGQM), 97 to 118 (SLLY…VELK), 122 to 144 (NIRA…GALK), 145 to 167 (ELHE…SKLP), and 168 to 189 (KLKK…EIFI).

The protein resides in the cytoplasm. In terms of biological role, may be involved in the regulation of spermatogenesis and sperm maturation. This chain is Leucine-rich repeat-containing protein 18 (LRRC18), found in Homo sapiens (Human).